Consider the following 230-residue polypeptide: 2,3-bisphosphoglycerate-dependent phosphoglycerate mutase (230 aa).

Residues 8 to 15, 21 to 22, Arg60, 87 to 90, Lys98, and 114 to 115 each bind substrate; these read RHGQSIWN, TG, ERHY, and RR. The active-site Tele-phosphohistidine intermediate is His9. Glu87 acts as the Proton donor/acceptor in catalysis. The disordered stretch occupies residues 117 to 143; it reads YDTPPPALDAEDERHPRHDPRYAGLDP. The segment covering 128 to 137 has biased composition (basic and acidic residues); the sequence is DERHPRHDPR. 183–184 lines the substrate pocket; the sequence is GN.

This sequence belongs to the phosphoglycerate mutase family. BPG-dependent PGAM subfamily. Homodimer.

It carries out the reaction (2R)-2-phosphoglycerate = (2R)-3-phosphoglycerate. It participates in carbohydrate degradation; glycolysis; pyruvate from D-glyceraldehyde 3-phosphate: step 3/5. Its function is as follows. Catalyzes the interconversion of 2-phosphoglycerate and 3-phosphoglycerate. The polypeptide is 2,3-bisphosphoglycerate-dependent phosphoglycerate mutase (Halorhodospira halophila (strain DSM 244 / SL1) (Ectothiorhodospira halophila (strain DSM 244 / SL1))).